The primary structure comprises 358 residues: Ferredoxin--NADP reductase (358 aa).

FAD contacts are provided by D38, Q46, Y51, V91, F126, D301, and T341.

The protein belongs to the ferredoxin--NADP reductase type 2 family. As to quaternary structure, homodimer. It depends on FAD as a cofactor.

The enzyme catalyses 2 reduced [2Fe-2S]-[ferredoxin] + NADP(+) + H(+) = 2 oxidized [2Fe-2S]-[ferredoxin] + NADPH. The polypeptide is Ferredoxin--NADP reductase (Paracidovorax citrulli (strain AAC00-1) (Acidovorax citrulli)).